The sequence spans 230 residues: 2,3-bisphosphoglycerate-dependent phosphoglycerate mutase (230 aa).

Residues 8–15 (RHGESEWN), 21–22 (TG), Arg-60, 87–90 (ERHY), Lys-98, 114–115 (RR), and 183–184 (GN) each bind substrate. His-9 functions as the Tele-phosphohistidine intermediate in the catalytic mechanism. Glu-87 functions as the Proton donor/acceptor in the catalytic mechanism.

Belongs to the phosphoglycerate mutase family. BPG-dependent PGAM subfamily.

It carries out the reaction (2R)-2-phosphoglycerate = (2R)-3-phosphoglycerate. The protein operates within carbohydrate degradation; glycolysis; pyruvate from D-glyceraldehyde 3-phosphate: step 3/5. Its function is as follows. Catalyzes the interconversion of 2-phosphoglycerate and 3-phosphoglycerate. This is 2,3-bisphosphoglycerate-dependent phosphoglycerate mutase from Streptococcus mutans serotype c (strain ATCC 700610 / UA159).